The primary structure comprises 175 residues: MELGQEATDDKRYVLVGRISGLYGVQGWLRVYSYTQPRNNILDYEPWYLQQNGAWQARRLRKGRVQGKGIVVALEGIDERDVAALWVGCEIAVHRDQLPPPQEGEYYWSDLIGLQVITLQGEVLGQVDRLLETGANDVLVVRGERERLLPFLMGMIVKQVDLQQGLLTVDWDPDF.

Residues 103-175 (EGEYYWSDLI…LLTVDWDPDF (73 aa)) enclose the PRC barrel domain.

The protein belongs to the RimM family. Binds ribosomal protein uS19.

The protein resides in the cytoplasm. In terms of biological role, an accessory protein needed during the final step in the assembly of 30S ribosomal subunit, possibly for assembly of the head region. Essential for efficient processing of 16S rRNA. May be needed both before and after RbfA during the maturation of 16S rRNA. It has affinity for free ribosomal 30S subunits but not for 70S ribosomes. The polypeptide is Ribosome maturation factor RimM (Nitrosococcus oceani (strain ATCC 19707 / BCRC 17464 / JCM 30415 / NCIMB 11848 / C-107)).